Consider the following 154-residue polypeptide: Transcriptional repressor NrdR (154 aa).

The segment at C3–C34 is a zinc-finger region. An ATP-cone domain is found at L46–D136.

It belongs to the NrdR family. The cofactor is Zn(2+).

Negatively regulates transcription of bacterial ribonucleotide reductase nrd genes and operons by binding to NrdR-boxes. This is Transcriptional repressor NrdR from Mycobacterium avium (strain 104).